Consider the following 180-residue polypeptide: ADP-ribosylation factor 4 (180 aa).

A lipid anchor (N-myristoyl glycine) is attached at glycine 2. GTP-binding positions include 24-31 (GLDAAGKT), 67-71 (DVGGQ), and 126-129 (NKQD). At serine 147 the chain carries Phosphoserine.

Belongs to the small GTPase superfamily. Arf family. As to quaternary structure, forms a complex containing RAB11A, ASAP1, RAB3IP, RAP11FIP3 and ARF4; the complex promotes preciliary trafficking; the complex binds to RHO in photoreceptor cells and promotes RHO ciliary transport.

The protein resides in the golgi apparatus. It is found in the membrane. Its function is as follows. GTP-binding protein that functions as an allosteric activator of the cholera toxin catalytic subunit, an ADP-ribosyltransferase. Involved in protein trafficking; may modulate vesicle budding and uncoating within the Golgi apparatus. Part of the ciliary targeting complex containing Rab11, ASAP1, Rabin8/RAB3IP, RAB11FIP3 and ARF4, which direct preciliary vesicle trafficking to mother centriole and ciliogenesis initiation. In Mus musculus (Mouse), this protein is ADP-ribosylation factor 4 (Arf4).